An 81-amino-acid polypeptide reads, in one-letter code: Sulfur carrier protein TusA (81 aa).

Catalysis depends on Cys-19, which acts as the Cysteine persulfide intermediate.

Belongs to the sulfur carrier protein TusA family.

Its subcellular location is the cytoplasm. Sulfur carrier protein which probably makes part of a sulfur-relay system. The polypeptide is Sulfur carrier protein TusA (Shewanella sediminis (strain HAW-EB3)).